The sequence spans 359 residues: Outer membrane protein assembly factor BamC (359 aa).

An N-terminal signal peptide occupies residues 1–34 (MASLFDKNSFQMTRLQKTAVAKVVGVSLIMLLAA). Cys35 carries N-palmitoyl cysteine lipidation. Cys35 carries the S-diacylglycerol cysteine lipid modification.

Belongs to the BamC family. As to quaternary structure, part of the Bam complex, which is composed of the outer membrane protein BamA, and four lipoproteins BamB, BamC, BamD and BamE.

It localises to the cell outer membrane. Part of the outer membrane protein assembly complex, which is involved in assembly and insertion of beta-barrel proteins into the outer membrane. The polypeptide is Outer membrane protein assembly factor BamC (Rahnella sp. (strain Y9602)).